The chain runs to 255 residues: 4-diphosphocytidyl-2-C-methyl-D-erythritol kinase (255 aa).

Residue K6 is part of the active site. Residue 95 to 105 (PVCAGLGGGSS) participates in ATP binding. Residue D137 is part of the active site.

The protein belongs to the GHMP kinase family. IspE subfamily.

It catalyses the reaction 4-CDP-2-C-methyl-D-erythritol + ATP = 4-CDP-2-C-methyl-D-erythritol 2-phosphate + ADP + H(+). The protein operates within isoprenoid biosynthesis; isopentenyl diphosphate biosynthesis via DXP pathway; isopentenyl diphosphate from 1-deoxy-D-xylulose 5-phosphate: step 3/6. Functionally, catalyzes the phosphorylation of the position 2 hydroxy group of 4-diphosphocytidyl-2C-methyl-D-erythritol. The polypeptide is 4-diphosphocytidyl-2-C-methyl-D-erythritol kinase (Campylobacter jejuni subsp. jejuni serotype O:23/36 (strain 81-176)).